The sequence spans 318 residues: Ribosomal RNA small subunit methyltransferase A (318 aa).

N40, V42, G67, E88, D118, and N137 together coordinate S-adenosyl-L-methionine. Basic and acidic residues predominate over residues 296–305; it reads ADRGGSDREG. The interval 296–318 is disordered; it reads ADRGGSDREGTSPPTAGQGAPAC.

Belongs to the class I-like SAM-binding methyltransferase superfamily. rRNA adenine N(6)-methyltransferase family. RsmA subfamily.

The protein resides in the cytoplasm. It catalyses the reaction adenosine(1518)/adenosine(1519) in 16S rRNA + 4 S-adenosyl-L-methionine = N(6)-dimethyladenosine(1518)/N(6)-dimethyladenosine(1519) in 16S rRNA + 4 S-adenosyl-L-homocysteine + 4 H(+). Its function is as follows. Specifically dimethylates two adjacent adenosines (A1518 and A1519) in the loop of a conserved hairpin near the 3'-end of 16S rRNA in the 30S particle. May play a critical role in biogenesis of 30S subunits. The protein is Ribosomal RNA small subunit methyltransferase A of Mycobacterium avium (strain 104).